The primary structure comprises 1290 residues: Period circadian protein homolog 1 (1290 aa).

The segment at 1–134 is disordered; that stretch reads MSGPLEGADG…SSEQSARART (134 aa). The interval 1 to 151 is interaction with BTRC; that stretch reads MSGPLEGADG…LRELKLRLPP (151 aa). The segment covering 25–38 has biased composition (pro residues); it reads VPSPGPPQHRPCPG. Composition is skewed to low complexity over residues 48-57 and 64-115; these read NSNGSSGNES and GASQ…ASSE. A compositionally biased stretch (polar residues) spans 116–132; it reads QDNPSTSGCSSEQSARA. T121 carries the phosphothreonine; by CSNK1E modification. A phosphoserine; by CSNK1E mark is found at S122 and S126. The short motif at 138–147 is the Nuclear export signal 1 element; sequence LMTALRELKL. 2 consecutive PAS domains span residues 208-275 and 348-414; these read ITSE…PSRL and YEAP…KILQ. In terms of domain architecture, PAC spans 422–465; that stretch reads HSPIRFCARNGEYVTMDTSWAGFVHPWSRKVAFVLGRHKVRTAP. Positions 489 to 498 match the Nuclear export signal 2 motif; that stretch reads LSEQIHRLLL. 2 disordered regions span residues 508 to 544 and 646 to 698; these read GLCGVGAVTSPGPLHSPGSSSDSNGGDAEGPGPPAPV and TTKR…KEPV. Composition is skewed to low complexity over residues 517-533 and 652-662; these read SPGPLHSPGSSSDSNGG and ASSSSYTTSSA. A required for phosphorylation by CSNK1E region spans residues 596–815; it reads ELEAGSAPVQ…GLDSSSTAPS (220 aa). Phosphoserine is present on residues S661, S663, and S704. Disordered stretches follow at residues 749–772, 805–874, and 938–977; these read GLAPGPAPSPAPSPTVAPDPAPDA, RGLD…PPAT, and ALQTPAEGPPTPASHSPSPSLPALAPSPPHRPDSPLFNSR. Residues 751 to 769 show a composition bias toward pro residues; sequence APGPAPSPAPSPTVAPDPA. S815 is modified (phosphoserine). The Nuclear localization signal signature appears at 827 to 843; it reads APPSRRHHCRSKAKRSR. Positions 830-847 are enriched in basic residues; the sequence is SRRHHCRSKAKRSRHHQN. A compositionally biased stretch (pro residues) spans 860 to 874; that stretch reads SPVPPSTPWPTPPAT. A compositionally biased stretch (low complexity) spans 950 to 961; the sequence is ASHSPSPSLPAL. 2 positions are modified to phosphoserine: S979 and S980. Positions 982 to 989 match the Nuclear export signal 3 motif; sequence LQLNLLQL. Residues 996-1037 are disordered; sequence EGAAVAGGPGSSAGPPPPSAEAAEPEARLAEVTESSNQDALS. The LXXLL motif lies at 1043–1047; sequence LELLL. The span at 1051-1062 shows a compositional bias: low complexity; that stretch reads SRSGTGSAASGS. Disordered stretches follow at residues 1051–1098 and 1207–1290; these read SRSG…SKYF and SSTQ…NCTS. The span at 1063-1077 shows a compositional bias: gly residues; sequence LGSGLGSGSGSGSHE. Residues 1078 to 1095 show a composition bias toward low complexity; it reads GGSTSASITRSSQSSHTS. Positions 1149-1290 are CRY binding domain; the sequence is SRDMTSVLKQ…ALPTAGNCTS (142 aa). Residues 1236–1248 show a composition bias toward gly residues; it reads GEQGSSGGGSGEG.

Homodimer. Component of the circadian core oscillator, which includes the CRY proteins, CLOCK or NPAS2, BMAL1 or BMAL2, CSNK1D and/or CSNK1E, TIMELESS, and the PER proteins. Interacts directly with TIMELESS, PER2, PER3, CRY1 and CRY2. Interacts with BMAL1 and CLOCK. Interacts with GPRASP1. Interacts (phosphorylated) with BTRC and FBXW11; the interactions trigger proteasomal degradation. Interacts with NONO, WDR5 and SFPQ. Interacts with USP2. Interacts with HNF4A. Post-translationally, phosphorylated on serine residues by CSNK1D, CSNK1E and probably also by CSNK1G2. Phosphorylation by CSNK1D or CSNK1E promotes nuclear location of PER proteins as well as ubiquitination and subsequent degradation. May be dephosphorylated by PP1. In terms of processing, ubiquitinated; requires phosphorylation by CSNK1E and interaction with BTRC and FBXW11. Deubiquitinated by USP2. Widely expressed. Expressed in hair follicles (at protein level). Found in heart, brain, placenta, lung, liver, skeletal muscle, pancreas, kidney, spleen, thymus, prostate, testis, ovary and small intestine. Highest level in skeletal muscle.

It localises to the nucleus. The protein resides in the cytoplasm. In terms of biological role, transcriptional repressor which forms a core component of the circadian clock. The circadian clock, an internal time-keeping system, regulates various physiological processes through the generation of approximately 24 hour circadian rhythms in gene expression, which are translated into rhythms in metabolism and behavior. It is derived from the Latin roots 'circa' (about) and 'diem' (day) and acts as an important regulator of a wide array of physiological functions including metabolism, sleep, body temperature, blood pressure, endocrine, immune, cardiovascular, and renal function. Consists of two major components: the central clock, residing in the suprachiasmatic nucleus (SCN) of the brain, and the peripheral clocks that are present in nearly every tissue and organ system. Both the central and peripheral clocks can be reset by environmental cues, also known as Zeitgebers (German for 'timegivers'). The predominant Zeitgeber for the central clock is light, which is sensed by retina and signals directly to the SCN. The central clock entrains the peripheral clocks through neuronal and hormonal signals, body temperature and feeding-related cues, aligning all clocks with the external light/dark cycle. Circadian rhythms allow an organism to achieve temporal homeostasis with its environment at the molecular level by regulating gene expression to create a peak of protein expression once every 24 hours to control when a particular physiological process is most active with respect to the solar day. Transcription and translation of core clock components (CLOCK, NPAS2, BMAL1, BMAL2, PER1, PER2, PER3, CRY1 and CRY2) plays a critical role in rhythm generation, whereas delays imposed by post-translational modifications (PTMs) are important for determining the period (tau) of the rhythms (tau refers to the period of a rhythm and is the length, in time, of one complete cycle). A diurnal rhythm is synchronized with the day/night cycle, while the ultradian and infradian rhythms have a period shorter and longer than 24 hours, respectively. Disruptions in the circadian rhythms contribute to the pathology of cardiovascular diseases, cancer, metabolic syndromes and aging. A transcription/translation feedback loop (TTFL) forms the core of the molecular circadian clock mechanism. Transcription factors, CLOCK or NPAS2 and BMAL1 or BMAL2, form the positive limb of the feedback loop, act in the form of a heterodimer and activate the transcription of core clock genes and clock-controlled genes (involved in key metabolic processes), harboring E-box elements (5'-CACGTG-3') within their promoters. The core clock genes: PER1/2/3 and CRY1/2 which are transcriptional repressors form the negative limb of the feedback loop and interact with the CLOCK|NPAS2-BMAL1|BMAL2 heterodimer inhibiting its activity and thereby negatively regulating their own expression. This heterodimer also activates nuclear receptors NR1D1/2 and RORA/B/G, which form a second feedback loop and which activate and repress BMAL1 transcription, respectively. Regulates circadian target genes expression at post-transcriptional levels, but may not be required for the repression at transcriptional level. Controls PER2 protein decay. Represses CRY2 preventing its repression on CLOCK/BMAL1 target genes such as FXYD5 and SCNN1A in kidney and PPARA in liver. Besides its involvement in the maintenance of the circadian clock, has an important function in the regulation of several processes. Participates in the repression of glucocorticoid receptor NR3C1/GR-induced transcriptional activity by reducing the association of NR3C1/GR to glucocorticoid response elements (GREs) by BMAL1:CLOCK. Plays a role in the modulation of the neuroinflammatory state via the regulation of inflammatory mediators release, such as CCL2 and IL6. In spinal astrocytes, negatively regulates the MAPK14/p38 and MAPK8/JNK MAPK cascades as well as the subsequent activation of NFkappaB. Coordinately regulates the expression of multiple genes that are involved in the regulation of renal sodium reabsorption. Can act as gene expression activator in a gene and tissue specific manner, in kidney enhances WNK1 and SLC12A3 expression in collaboration with CLOCK. Modulates hair follicle cycling. Represses the CLOCK-BMAL1 induced transcription of BHLHE40/DEC1. The sequence is that of Period circadian protein homolog 1 (PER1) from Homo sapiens (Human).